The primary structure comprises 332 residues: Glycerol-3-phosphate dehydrogenase [NAD(P)+] (332 aa).

3 residues coordinate NADPH: S15, W16, and K110. Sn-glycerol 3-phosphate is bound by residues K110, G137, and S139. A141 provides a ligand contact to NADPH. 5 residues coordinate sn-glycerol 3-phosphate: K192, D245, S255, R256, and N257. The active-site Proton acceptor is K192. R256 contacts NADPH. Residue E282 coordinates NADPH.

It belongs to the NAD-dependent glycerol-3-phosphate dehydrogenase family.

It localises to the cytoplasm. The catalysed reaction is sn-glycerol 3-phosphate + NAD(+) = dihydroxyacetone phosphate + NADH + H(+). The enzyme catalyses sn-glycerol 3-phosphate + NADP(+) = dihydroxyacetone phosphate + NADPH + H(+). It functions in the pathway membrane lipid metabolism; glycerophospholipid metabolism. In terms of biological role, catalyzes the reduction of the glycolytic intermediate dihydroxyacetone phosphate (DHAP) to sn-glycerol 3-phosphate (G3P), the key precursor for phospholipid synthesis. The sequence is that of Glycerol-3-phosphate dehydrogenase [NAD(P)+] from Coxiella burnetii (strain CbuK_Q154) (Coxiella burnetii (strain Q154)).